A 157-amino-acid chain; its full sequence is Protein Smg homolog (157 aa).

The protein belongs to the Smg family.

This Shewanella frigidimarina (strain NCIMB 400) protein is Protein Smg homolog.